We begin with the raw amino-acid sequence, 459 residues long: Endoglucanase CelA (459 aa).

An N-terminal signal peptide occupies residues 1–27 (MKRLLALLATGVSIVGLTALAGPPAQA). Positions 28-134 (ATGCKAEYTI…TLNGATCSGS (107 aa)) constitute a CBM2 domain. Cysteine 31 and cysteine 131 are joined by a disulfide. A disordered region spans residues 129 to 151 (ATCSGSVTDPPTDPPTDPPATGT). The linker ('hinge') (Pro-Thr box) stretch occupies residues 136-147 (TDPPTDPPTDPP). The catalytic stretch occupies residues 148-357 (ATGTPAAVNG…YAFHFYAASH (210 aa)). The active-site Proton donor is glutamate 286. The active-site Nucleophile is the glutamate 378.

This sequence belongs to the glycosyl hydrolase 5 (cellulase A) family. The linker region (also termed 'hinge') may be a potential site for proteolysis.

The enzyme catalyses Endohydrolysis of (1-&gt;4)-beta-D-glucosidic linkages in cellulose, lichenin and cereal beta-D-glucans.. In Streptomyces lividans, this protein is Endoglucanase CelA (celA).